The chain runs to 490 residues: ATP synthase subunit beta, chloroplastic (490 aa).

170–177 is a binding site for ATP; sequence GGAGVGKT.

It belongs to the ATPase alpha/beta chains family. In terms of assembly, F-type ATPases have 2 components, CF(1) - the catalytic core - and CF(0) - the membrane proton channel. CF(1) has five subunits: alpha(3), beta(3), gamma(1), delta(1), epsilon(1). CF(0) has four main subunits: a(1), b(1), b'(1) and c(9-12).

It is found in the plastid. Its subcellular location is the chloroplast thylakoid membrane. It carries out the reaction ATP + H2O + 4 H(+)(in) = ADP + phosphate + 5 H(+)(out). Produces ATP from ADP in the presence of a proton gradient across the membrane. The catalytic sites are hosted primarily by the beta subunits. The chain is ATP synthase subunit beta, chloroplastic from Pinus koraiensis (Korean pine).